Here is an 887-residue protein sequence, read N- to C-terminus: Translation initiation factor IF-2 (887 aa).

Disordered stretches follow at residues 31–87 (KLAQ…PRRI), 94–113 (SFVSEDLNSPQPPVPVDSDA), and 129–285 (VETE…KWRK). Over residues 42–59 (SSSEKPSTKVPEKIAKEK) the composition is skewed to basic and acidic residues. Basic and acidic residues-rich tracts occupy residues 150–171 (VVAKEPPAPKKEPEVVVKKEPP) and 199–212 (PKKEDKPAPKEKTK). Over residues 213–223 (TTQTKPQQSSD) the composition is skewed to low complexity. Over residues 241 to 273 (YRRDVSKKSGSDFRDRAKKDDNPKAFTGRDRYG) the composition is skewed to basic and acidic residues. Positions 393 to 562 (TRPPIVAFMG…ALQAEVLELK (170 aa)) constitute a tr-type G domain. The tract at residues 402–409 (GHVDHGKT) is G1. Residue 402–409 (GHVDHGKT) participates in GTP binding. A G2 region spans residues 427 to 431 (AITQH). Residues 448–451 (DTPG) are G3. Residues 448-452 (DTPGH) and 502-505 (NKCD) contribute to the GTP site. The G4 stretch occupies residues 502-505 (NKCD). A G5 region spans residues 538-540 (SAK).

The protein belongs to the TRAFAC class translation factor GTPase superfamily. Classic translation factor GTPase family. IF-2 subfamily.

The protein localises to the cytoplasm. Its function is as follows. One of the essential components for the initiation of protein synthesis. Protects formylmethionyl-tRNA from spontaneous hydrolysis and promotes its binding to the 30S ribosomal subunits. Also involved in the hydrolysis of GTP during the formation of the 70S ribosomal complex. This chain is Translation initiation factor IF-2, found in Chlamydia caviae (strain ATCC VR-813 / DSM 19441 / 03DC25 / GPIC) (Chlamydophila caviae).